Consider the following 229-residue polypeptide: uncharacterized protein (229 aa).

This is an uncharacterized protein from Dictyostelium discoideum (Social amoeba).